A 577-amino-acid chain; its full sequence is Double-stranded RNA-binding protein Staufen homolog 1 (577 aa).

S2 carries the N-acetylserine modification. A compositionally biased stretch (polar residues) spans 34–44; sequence SIPSTTSSLPS. Positions 34 to 55 are disordered; sequence SIPSTTSSLPSENAGRPIQNSA. Positions 72–162 constitute a DRBM 1 domain; the sequence is TPTVELNALC…AAKALRILQN (91 aa). The residue at position 108 (R108) is an Asymmetric dimethylarginine. Residue R115 is modified to Asymmetric dimethylarginine; alternate. R115 is subject to Omega-N-methylarginine; alternate. The residue at position 176 (S176) is a Phosphoserine. Residues 184–251 enclose the DRBM 2 domain; sequence SEISQVFEIA…AIAVLEELKK (68 aa). S278 is subject to Phosphoserine. The DRBM 3 domain occupies 286-354; sequence NPISRLAQIQ…AENMLEILGF (69 aa). The segment at 360–397 is disordered; that stretch reads QPTKPALKSEEKTPIKKPGDGRKVTFFEPGSGDENGTS. Over residues 366–384 the composition is skewed to basic and acidic residues; it reads LKSEEKTPIKKPGDGRKVT. At S390 the chain carries Phosphoserine.

Binds tubulin. Binds with low affinity single-stranded RNA or DNA homopolymers. Interacts with CASC3 in an RNA-dependent manner. Identified in a mRNP complex, at least composed of DHX9, DDX3X, ELAVL1, HNRNPU, IGF2BP1, ILF3, PABPC1, PCBP2, PTBP2, STAU1, STAU2, SYNCRIP and YBX1. As to quaternary structure, (Microbial infection) Interacts with HERV-K rec and gag proteins. In terms of assembly, (Microbial infection) Interacts with HIV-1 GAG polyprotein. (Microbial infection) Interacts with influenza virus NS1 protein. As to quaternary structure, (Microbial infection) Interacts with Ebola virus NP, VP30 and VP35. As to expression, widely expressed. Expressed in brain, pancreas, heart, skeletal muscles, liver, lung, kidney and placenta.

It localises to the cytoplasm. The protein localises to the rough endoplasmic reticulum. Binds double-stranded RNA (regardless of the sequence) and tubulin. May play a role in specific positioning of mRNAs at given sites in the cell by cross-linking cytoskeletal and RNA components, and in stimulating their translation at the site. Functionally, (Microbial infection) Plays a role in virus particles production of many viruses including of HIV-1, HERV-K, ebola virus and influenza virus. Acts by interacting with various viral proteins involved in particle budding process. This Homo sapiens (Human) protein is Double-stranded RNA-binding protein Staufen homolog 1 (STAU1).